We begin with the raw amino-acid sequence, 323 residues long: tRNA U34 carboxymethyltransferase (323 aa).

Carboxy-S-adenosyl-L-methionine is bound by residues Lys91, Trp105, Lys110, Gly130, Asp152–Thr154, Ile181–Glu182, Met196, Tyr200, and Arg315.

Belongs to the class I-like SAM-binding methyltransferase superfamily. CmoB family. As to quaternary structure, homotetramer.

The enzyme catalyses carboxy-S-adenosyl-L-methionine + 5-hydroxyuridine(34) in tRNA = 5-carboxymethoxyuridine(34) in tRNA + S-adenosyl-L-homocysteine + H(+). Functionally, catalyzes carboxymethyl transfer from carboxy-S-adenosyl-L-methionine (Cx-SAM) to 5-hydroxyuridine (ho5U) to form 5-carboxymethoxyuridine (cmo5U) at position 34 in tRNAs. This is tRNA U34 carboxymethyltransferase from Salmonella paratyphi A (strain ATCC 9150 / SARB42).